A 321-amino-acid polypeptide reads, in one-letter code: UDP-N-acetylenolpyruvoylglucosamine reductase (321 aa).

Residues 39 to 205 enclose the FAD-binding PCMH-type domain; the sequence is RTGGLAELFY…TAALLEGEPG (167 aa). Residue Arg-185 is part of the active site. The Proton donor role is filled by Ser-234. Residue Glu-304 is part of the active site.

This sequence belongs to the MurB family. Requires FAD as cofactor.

It is found in the cytoplasm. It catalyses the reaction UDP-N-acetyl-alpha-D-muramate + NADP(+) = UDP-N-acetyl-3-O-(1-carboxyvinyl)-alpha-D-glucosamine + NADPH + H(+). It participates in cell wall biogenesis; peptidoglycan biosynthesis. Functionally, cell wall formation. The polypeptide is UDP-N-acetylenolpyruvoylglucosamine reductase (Bartonella quintana (strain Toulouse) (Rochalimaea quintana)).